The primary structure comprises 195 residues: Imidazoleglycerol-phosphate dehydratase (195 aa).

It belongs to the imidazoleglycerol-phosphate dehydratase family.

The protein localises to the cytoplasm. The enzyme catalyses D-erythro-1-(imidazol-4-yl)glycerol 3-phosphate = 3-(imidazol-4-yl)-2-oxopropyl phosphate + H2O. It participates in amino-acid biosynthesis; L-histidine biosynthesis; L-histidine from 5-phospho-alpha-D-ribose 1-diphosphate: step 6/9. This chain is Imidazoleglycerol-phosphate dehydratase, found in Paraburkholderia phytofirmans (strain DSM 17436 / LMG 22146 / PsJN) (Burkholderia phytofirmans).